A 70-amino-acid chain; its full sequence is Protein SlyX homolog (70 aa).

The protein belongs to the SlyX family.

This Shewanella loihica (strain ATCC BAA-1088 / PV-4) protein is Protein SlyX homolog.